The primary structure comprises 88 residues: U-scoloptoxin(01)-Tl1a (88 aa).

A signal peptide spans Met-1–Ala-16. The Chitin-binding type-2 domain occupies Gly-25 to Arg-81. Cys-58 and Cys-71 form a disulfide bridge.

The protein belongs to the scoloptoxin-01 family. Contains 3 disulfide bonds. As to expression, expressed by the venom gland.

It localises to the secreted. The polypeptide is U-scoloptoxin(01)-Tl1a (Thereuopoda longicornis (Long-legged centipede)).